The following is a 182-amino-acid chain: Thioredoxin F-type, chloroplastic (182 aa).

The disordered stretch occupies residues 1-22 (MPLSLRLAPSPTALSPTTGGFS). The region spanning 52–177 (KRGDSSVVRC…LVAAIETARS (126 aa)) is the Thioredoxin domain. Catalysis depends on nucleophile residues C102 and C105. Cysteines 102 and 105 form a disulfide.

This sequence belongs to the thioredoxin family. Plant F-type subfamily. In terms of assembly, forms a complex with heterodimeric ferredoxin-thioredoxin reductase (FTR) and ferredoxin.

The protein resides in the plastid. Its subcellular location is the chloroplast. Functionally, participates in various redox reactions through the reversible oxidation of the active center dithiol to a disulfide. The F form is known to activate a number of enzymes of the photosynthetic carbon cycle. The polypeptide is Thioredoxin F-type, chloroplastic (TRXF) (Brassica napus (Rape)).